A 676-amino-acid chain; its full sequence is MSDSSEATVKRPLDAHVGPSENAAKKLKIEQRTQADGIHEADVGITLFLSPELPGFRGQIKQRYTDFLVNEIDQEGKVIHLTDKGFKMPKKPQRSKEEVNAEKESEAARRQEFNVDPELRNQLVEIFGEEDVLKIESVYRTANKMETAKNFEDKSVRTKIHQLLREAFKNELESVTTDTNTFKIARSNRNSRTNKQEKINQTRDANGVENWGYGPSKDFIHFTLHKENKDTMEAVNVITKLLRVPSRVIRYAGTKDRRAVTCQRVSISKIGLDRLNALNRTLKGMIIGNYNFSDASLNLGDLKGNEFVVVIRDVTTGNSEVSLEEIVSNGCKSLSENGFINYFGMQRFGTFSISTHTIGRELLLSNWKKAAELILSDQDNVLPKSKEARKIWAETKDAALALKQMPRQCLAENALLYSLSNQRKEEDGTYSENAYYTAIMKIPRNLRTMYVHAYQSYVWNSIASKRIELHGLKLVVGDLVIDTSEKSPLISGIDDEDFDEDVREAQFIRAKAVTQEDIDSVKYTMEDVVLPSPGFDVLYPSNEELKQLYVDILKADNMDPFNMRRKVRDFSLAGSYRTVIQKPKSLEYRIIHYDDPSQQLVNTDLDILNNTRAKESGQKYMKAKLDRYMPDKGGEKTAVVLKFQLGTSAYATMALRELMKLETSRRGDMCDVKENI.

Disordered regions lie at residues 1–27 and 87–110; these read MSDS…AKKL and KMPK…AARR. N-acetylserine is present on serine 2. Residues 94–110 are compositionally biased toward basic and acidic residues; the sequence is RSKEEVNAEKESEAARR. Aspartate 256 functions as the Nucleophile in the catalytic mechanism. The region spanning 338–582 is the TRUD domain; that stretch reads GFINYFGMQR…AGSYRTVIQK (245 aa).

The protein belongs to the pseudouridine synthase TruD family.

Its subcellular location is the nucleus. The protein resides in the cytoplasm. It catalyses the reaction uridine in 5S rRNA = pseudouridine in 5S rRNA. The catalysed reaction is uridine in snRNA = pseudouridine in snRNA. It carries out the reaction uridine(13) in tRNA = pseudouridine(13) in tRNA. The enzyme catalyses a uridine in mRNA = a pseudouridine in mRNA. Catalyzes pseudouridylation at position 35 in U2 snRNA stem-loop II region which induces particular conformation of the mRNA-U2 snRNA duplex and places the nucleophile in an accessible position for the first step of splicing. Also catalyzes pseudouridylation at position 56 in U2 snRNA. Also catalyzes pseudouridylation at position 50 in 5S rRNA, position 13 in cytoplasmic tRNAs, and position 35 in pre-tRNA(Tyr). Pseudouridine residues in tRNAs may stabilize the local RNA conformation, favor interactions with protein partners and play an important role in the stabilization of the codon-anticodon interaction with mRNA. Also catalyzes pseudouridylation of mRNAs in response to heat shock: mediates pseudouridylation of mRNAs with the consensus sequence 5'-UGUAR-3'. The sequence is that of Multisubstrate pseudouridine synthase 7 from Saccharomyces cerevisiae (strain ATCC 204508 / S288c) (Baker's yeast).